The following is a 116-amino-acid chain: Iron-sulfur cluster insertion protein ErpA (116 aa).

Residues cysteine 44, cysteine 108, and cysteine 110 each contribute to the iron-sulfur cluster site.

It belongs to the HesB/IscA family. In terms of assembly, homodimer. Iron-sulfur cluster serves as cofactor.

Its function is as follows. Required for insertion of 4Fe-4S clusters for at least IspG. This chain is Iron-sulfur cluster insertion protein ErpA, found in Pseudomonas putida (strain ATCC 47054 / DSM 6125 / CFBP 8728 / NCIMB 11950 / KT2440).